The sequence spans 144 residues: Large ribosomal subunit protein uL13 (144 aa).

It belongs to the universal ribosomal protein uL13 family. Part of the 50S ribosomal subunit.

This protein is one of the early assembly proteins of the 50S ribosomal subunit, although it is not seen to bind rRNA by itself. It is important during the early stages of 50S assembly. This Natronomonas pharaonis (strain ATCC 35678 / DSM 2160 / CIP 103997 / JCM 8858 / NBRC 14720 / NCIMB 2260 / Gabara) (Halobacterium pharaonis) protein is Large ribosomal subunit protein uL13.